A 137-amino-acid chain; its full sequence is Large-conductance mechanosensitive channel (137 aa).

A run of 2 helical transmembrane segments spans residues 9–29 (AFAV…GAAF) and 79–99 (IQSV…VKAI).

This sequence belongs to the MscL family. In terms of assembly, homopentamer.

Its subcellular location is the cell inner membrane. In terms of biological role, channel that opens in response to stretch forces in the membrane lipid bilayer. May participate in the regulation of osmotic pressure changes within the cell. The protein is Large-conductance mechanosensitive channel of Pseudomonas fluorescens (strain Pf0-1).